Consider the following 328-residue polypeptide: Oligopeptide transport ATP-binding protein AppD (328 aa).

In terms of domain architecture, ABC transporter spans 5-256; it reads LEVNNLKTYF…PLHPYTEGLL (252 aa). Residue 41 to 48 coordinates ATP; sequence GESGSGKS.

This sequence belongs to the ABC transporter superfamily.

The protein resides in the cell membrane. In terms of biological role, this protein is a component of an oligopeptide permease, a binding protein-dependent transport system. This APP system can completely substitute for the OPP system in both sporulation and genetic competence, though, unlike OPP, is incapable of transporting tripeptides. Probably responsible for energy coupling to the transport system. The polypeptide is Oligopeptide transport ATP-binding protein AppD (appD) (Bacillus subtilis (strain 168)).